Consider the following 365-residue polypeptide: Protein YIM1 (365 aa).

It belongs to the YIM1 family.

It is found in the lipid droplet. The protein localises to the mitochondrion. This Saccharomyces cerevisiae (strain ATCC 204508 / S288c) (Baker's yeast) protein is Protein YIM1 (YIM1).